Consider the following 191-residue polypeptide: Large ribosomal subunit protein uL29m (191 aa).

This sequence belongs to the universal ribosomal protein uL29 family. As to quaternary structure, component of the mitochondrial large ribosomal subunit. Mature mitochondrial ribosomes consist of a small (37S) and a large (54S) subunit. The 37S subunit contains at least 33 different proteins and 1 molecule of RNA (15S). The 54S subunit contains at least 45 different proteins and 1 molecule of RNA (21S).

The protein resides in the mitochondrion. This Sclerotinia sclerotiorum (strain ATCC 18683 / 1980 / Ss-1) (White mold) protein is Large ribosomal subunit protein uL29m (MRPL4).